The chain runs to 303 residues: UDP-3-O-acyl-N-acetylglucosamine deacetylase (303 aa).

Zn(2+)-binding residues include His78, His237, and Asp241. The Proton donor role is filled by His264.

This sequence belongs to the LpxC family. Zn(2+) serves as cofactor.

The catalysed reaction is a UDP-3-O-[(3R)-3-hydroxyacyl]-N-acetyl-alpha-D-glucosamine + H2O = a UDP-3-O-[(3R)-3-hydroxyacyl]-alpha-D-glucosamine + acetate. Its pathway is glycolipid biosynthesis; lipid IV(A) biosynthesis; lipid IV(A) from (3R)-3-hydroxytetradecanoyl-[acyl-carrier-protein] and UDP-N-acetyl-alpha-D-glucosamine: step 2/6. Its function is as follows. Catalyzes the hydrolysis of UDP-3-O-myristoyl-N-acetylglucosamine to form UDP-3-O-myristoylglucosamine and acetate, the committed step in lipid A biosynthesis. The chain is UDP-3-O-acyl-N-acetylglucosamine deacetylase from Pseudomonas fluorescens (strain SBW25).